A 124-amino-acid chain; its full sequence is Fluoride-specific ion channel FluC 1 (124 aa).

4 helical membrane passes run 7–27 (IQSKQLYKIFLLIVGSILGAI), 32–52 (LNNYFWVNISGAALLGLIVGL), 58–78 (IQFFLVIGFCGSFTTFSGWIL), and 93–113 (AGLICSNLLGGFTALSVTFWI). 2 residues coordinate Na(+): Gly68 and Thr71.

The protein belongs to the fluoride channel Fluc/FEX (TC 1.A.43) family.

Its subcellular location is the cell inner membrane. It catalyses the reaction fluoride(in) = fluoride(out). Its activity is regulated as follows. Na(+) is not transported, but it plays an essential structural role and its presence is essential for fluoride channel function. Its function is as follows. Fluoride-specific ion channel. Important for reducing fluoride concentration in the cell, thus reducing its toxicity. The chain is Fluoride-specific ion channel FluC 1 from Prochlorococcus marinus (strain SARG / CCMP1375 / SS120).